Here is a 96-residue protein sequence, read N- to C-terminus: Probable quinol oxidase subunit 4 (96 aa).

The next 3 membrane-spanning stretches (helical) occupy residues 8-28, 36-56, and 68-88; these read TVGF…TLYT, ITII…MFMH, and FKVL…YWVM.

Belongs to the cytochrome c oxidase bacterial subunit 4 family.

It localises to the cell membrane. The catalysed reaction is 2 a quinol + O2 = 2 a quinone + 2 H2O. Functionally, catalyzes quinol oxidation with the concomitant reduction of oxygen to water. The protein is Probable quinol oxidase subunit 4 (qoxD) of Staphylococcus saprophyticus subsp. saprophyticus (strain ATCC 15305 / DSM 20229 / NCIMB 8711 / NCTC 7292 / S-41).